A 465-amino-acid polypeptide reads, in one-letter code: NADH-quinone oxidoreductase subunit N (465 aa).

The next 13 helical transmembrane spans lie at 9–29 (FNFV…VLLL), 44–64 (ASII…GFVL), 73–93 (LFVS…FSML), 110–130 (FLFM…IVIF), 159–179 (YFTL…FVYL), 198–218 (PILL…LSIA), 235–255 (FIAF…LRIF), 265–285 (EYIV…VALI), 292–312 (MLAY…VSSM), 327–347 (IFAL…IFLI), 371–391 (IMLA…IFWG), 405–427 (YALV…KILI), and 444–464 (VKQK…VFLL).

This sequence belongs to the complex I subunit 2 family. In terms of assembly, NDH-1 is composed of 14 different subunits. Subunits NuoA, H, J, K, L, M, N constitute the membrane sector of the complex.

The protein resides in the cell inner membrane. The catalysed reaction is a quinone + NADH + 5 H(+)(in) = a quinol + NAD(+) + 4 H(+)(out). Functionally, NDH-1 shuttles electrons from NADH, via FMN and iron-sulfur (Fe-S) centers, to quinones in the respiratory chain. The immediate electron acceptor for the enzyme in this species is believed to be ubiquinone. Couples the redox reaction to proton translocation (for every two electrons transferred, four hydrogen ions are translocated across the cytoplasmic membrane), and thus conserves the redox energy in a proton gradient. This chain is NADH-quinone oxidoreductase subunit N, found in Campylobacter lari (strain RM2100 / D67 / ATCC BAA-1060).